The primary structure comprises 520 residues: Solute carrier family 2, facilitated glucose transporter member 14 (520 aa).

The Cytoplasmic portion of the chain corresponds to 1–29 (MEFHNGGHVSGIGGFLVSLTSRMKPHTLA). Residues 30-50 (VTPALIFAITVATIGSFQFGY) form a helical membrane-spanning segment. The Extracellular portion of the chain corresponds to 51-88 (NTGVINAPETIIKEFINKTLTDKANAPPSEVLLTNLWS). Residue asparagine 67 is glycosylated (N-linked (GlcNAc...) asparagine). A helical transmembrane segment spans residues 89–109 (LSVAIFSVGGMIGSFSVGLFV). Topologically, residues 110–117 (NRFGRRNS) are cytoplasmic. The chain crosses the membrane as a helical span at residues 118–138 (MLIVNLLAATGGCLMGLCKIA). At 139-148 (ESVEMLILGR) the chain is on the extracellular side. Residues 149–169 (LVIGLFCGLCTGFVPMYIGEI) form a helical membrane-spanning segment. Residues 170-177 (SPTALRGA) are Cytoplasmic-facing. The helical transmembrane segment at 178–198 (FGTLNQLGIVIGILVAQIFGL) threads the bilayer. Glutamine 183 provides a ligand contact to D-glucose. Over 199–207 (ELILGSEEL) the chain is Extracellular. The chain crosses the membrane as a helical span at residues 208–228 (WPVLLGFTILPAILQSAALPC). At 229–293 (CPESPRFLLI…LFRVSSYRQP (65 aa)) the chain is on the cytoplasmic side. A helical transmembrane segment spans residues 294-314 (IIISIVLQLSQQLSGINAVFY). Residues 304-305 (QQ) and asparagine 310 each bind D-glucose. Residues 315 to 328 (YSTGIFKDAGVQQP) lie on the Extracellular side of the membrane. The chain crosses the membrane as a helical span at residues 329–349 (IYATISAGVVNTIFTLLSLFL). Asparagine 339 provides a ligand contact to D-glucose. Residues 350 to 358 (VERAGRRTL) are Cytoplasmic-facing. Residues 359 to 379 (HMIGLGGMAFCSTLMTVSLLL) traverse the membrane as a helical segment. The Extracellular portion of the chain corresponds to 380-392 (KNHYNGMSFVCIG). Residues 393-413 (AILVFVACFEIGPGPIPWFIV) traverse the membrane as a helical segment. D-glucose-binding residues include glutamate 402 and tryptophan 410. Residues 414-423 (AELFSQGPRP) lie on the Cytoplasmic side of the membrane. A helical membrane pass occupies residues 424–444 (AAMAVAGCSNWTSNFLVGLLF). Residues 445–451 (PSAAYYL) are Extracellular-facing. Residues 452-472 (GAYVFIIFTGFLITFLAFTFF) form a helical membrane-spanning segment. Residues 473 to 520 (KVPETRGRTFEDITRAFEGQAHGADRSGKDGVMGMNSIEPAKETTTNV) lie on the Cytoplasmic side of the membrane. The tract at residues 493 to 520 (AHGADRSGKDGVMGMNSIEPAKETTTNV) is disordered.

It belongs to the major facilitator superfamily. Sugar transporter (TC 2.A.1.1) family. Glucose transporter subfamily. As to expression, mainly expressed in testis. Also expressed in small intestine, liver and kidney.

It localises to the cell membrane. The enzyme catalyses D-glucose(out) = D-glucose(in). It catalyses the reaction L-dehydroascorbate(out) = L-dehydroascorbate(in). Its function is as follows. Hexose transporter that can mediate the transport of glucose and dehydroascorbate across the cell membrane. This Homo sapiens (Human) protein is Solute carrier family 2, facilitated glucose transporter member 14.